The primary structure comprises 355 residues: F-box only protein 32 (355 aa).

The Nuclear localization signal signature appears at 62-67 (KKRKKD). The short motif at 169-173 (LLQTL) is the Nuclear export signal element. Positions 223 to 271 (LTFTDLPLCLQLNIMQRLSDGRDLVSLGQVAPDLHVLSEDRLLWKKLCQ) constitute an F-box domain. The Bipartite nuclear localization signal signature appears at 280–295 (RKRLILSDKGQLDWKK).

Part of the SCF (SKP1-CUL1-F-box) E3 ubiquitin-protein ligase complex SCF(FBXO32) formed of CUL1, SKP1, RBX1 and FBXO32.

Its subcellular location is the cytoplasm. The protein resides in the nucleus. The protein operates within protein modification; protein ubiquitination. In terms of biological role, substrate recognition component of a SCF (SKP1-CUL1-F-box protein) E3 ubiquitin-protein ligase complex which mediates the ubiquitination and subsequent proteasomal degradation of target proteins. Probably recognizes and binds to phosphorylated target proteins during skeletal muscle atrophy. Recognizes TERF1. The polypeptide is F-box only protein 32 (FBXO32) (Sus scrofa (Pig)).